A 428-amino-acid chain; its full sequence is Glutamate-1-semialdehyde 2,1-aminomutase (428 aa).

K265 carries the N6-(pyridoxal phosphate)lysine modification.

This sequence belongs to the class-III pyridoxal-phosphate-dependent aminotransferase family. HemL subfamily. Homodimer. The cofactor is pyridoxal 5'-phosphate.

Its subcellular location is the cytoplasm. It carries out the reaction (S)-4-amino-5-oxopentanoate = 5-aminolevulinate. It participates in porphyrin-containing compound metabolism; protoporphyrin-IX biosynthesis; 5-aminolevulinate from L-glutamyl-tRNA(Glu): step 2/2. This chain is Glutamate-1-semialdehyde 2,1-aminomutase, found in Ruthia magnifica subsp. Calyptogena magnifica.